A 159-amino-acid chain; its full sequence is NADH-quinone oxidoreductase subunit I (159 aa).

4Fe-4S ferredoxin-type domains follow at residues 51–80 (RRYE…IEAD) and 90–119 (TRYD…EGPN). The [4Fe-4S] cluster site is built by Cys60, Cys63, Cys66, Cys70, Cys99, Cys102, Cys105, and Cys109.

This sequence belongs to the complex I 23 kDa subunit family. NDH-1 is composed of 14 different subunits. Subunits NuoA, H, J, K, L, M, N constitute the membrane sector of the complex. It depends on [4Fe-4S] cluster as a cofactor.

It localises to the cell inner membrane. It carries out the reaction a quinone + NADH + 5 H(+)(in) = a quinol + NAD(+) + 4 H(+)(out). Functionally, NDH-1 shuttles electrons from NADH, via FMN and iron-sulfur (Fe-S) centers, to quinones in the respiratory chain. The immediate electron acceptor for the enzyme in this species is believed to be ubiquinone. Couples the redox reaction to proton translocation (for every two electrons transferred, four hydrogen ions are translocated across the cytoplasmic membrane), and thus conserves the redox energy in a proton gradient. The protein is NADH-quinone oxidoreductase subunit I of Rickettsia akari (strain Hartford).